We begin with the raw amino-acid sequence, 214 residues long: Orotate phosphoribosyltransferase (214 aa).

Lys-26 lines the 5-phospho-alpha-D-ribose 1-diphosphate pocket. 34–35 (FF) is an orotate binding site. Residues 72–73 (YK), Arg-99, Lys-100, Lys-103, His-105, and 124–132 (DDVITAGTA) each bind 5-phospho-alpha-D-ribose 1-diphosphate. Positions 128 and 156 each coordinate orotate.

It belongs to the purine/pyrimidine phosphoribosyltransferase family. PyrE subfamily. Homodimer. Requires Mg(2+) as cofactor.

The enzyme catalyses orotidine 5'-phosphate + diphosphate = orotate + 5-phospho-alpha-D-ribose 1-diphosphate. It functions in the pathway pyrimidine metabolism; UMP biosynthesis via de novo pathway; UMP from orotate: step 1/2. In terms of biological role, catalyzes the transfer of a ribosyl phosphate group from 5-phosphoribose 1-diphosphate to orotate, leading to the formation of orotidine monophosphate (OMP). The polypeptide is Orotate phosphoribosyltransferase (Actinobacillus succinogenes (strain ATCC 55618 / DSM 22257 / CCUG 43843 / 130Z)).